The following is a 268-amino-acid chain: ELL-associated factor 1 (268 aa).

The tract at residues Ile-106–Asp-268 is disordered. Residues Thr-128–Gly-154 show a composition bias toward pro residues. Ser-165 carries the post-translational modification Phosphoserine. Residues Asp-171–Val-181 are compositionally biased toward basic and acidic residues. A necessary for transactivation activity region spans residues Asp-182 to Ser-262. Positions Ser-188–Gly-213 are enriched in low complexity. Positions Asn-238–Asp-268 are enriched in polar residues.

It belongs to the EAF family. As to quaternary structure, component of the super elongation complex (SEC), at least composed of EAF1, EAF2, CDK9, MLLT3/AF9, AFF (AFF1 or AFF4), the P-TEFb complex and ELL (ELL, ELL2 or ELL3). Interacts with ELL and ELL2. In terms of tissue distribution, strongly expressed in heart, brain, placenta, lung, liver, skeletal muscle, kidney, pancreas, spleen, prostate, testis, small intestine and colon. Poorly expressed in thymus.

The protein localises to the nucleus speckle. It is found in the nucleus. The protein resides in the cajal body. Acts as a transcriptional transactivator of ELL and ELL2 elongation activities. The polypeptide is ELL-associated factor 1 (EAF1) (Homo sapiens (Human)).